Consider the following 307-residue polypeptide: MPLVAVAGPTGSGKSELALLIAEKFHGEIVNCDSLQVYRHFDIGTAKLPLGERRGIPHHLIDIIDPNELFTAGEYARIARNTIADISARGRLPILAGGTGFYLRALLDGLFEGPARDQPLRDRLTAREARRAGSLHRILRRLDSVSAAKIHANDVPKVTRALEVCLLTQRPVSELFARGRDSLRGYRTLKLGLLPDREVLYPRLDARCAWMFENGLVDEVRAILALGFAAECKPFESHGYKQALQHIRGELNLREAIFYAQRNTRNYAKRQITWFRREPELVWLKDFGNAPEIRETAMDRVAKFLGQ.

8-15 (GPTGSGKS) contacts ATP. 10–15 (TGSGKS) serves as a coordination point for substrate. The interval 33–36 (DSLQ) is interaction with substrate tRNA.

Belongs to the IPP transferase family. In terms of assembly, monomer. The cofactor is Mg(2+).

It catalyses the reaction adenosine(37) in tRNA + dimethylallyl diphosphate = N(6)-dimethylallyladenosine(37) in tRNA + diphosphate. Its function is as follows. Catalyzes the transfer of a dimethylallyl group onto the adenine at position 37 in tRNAs that read codons beginning with uridine, leading to the formation of N6-(dimethylallyl)adenosine (i(6)A). This Solibacter usitatus (strain Ellin6076) protein is tRNA dimethylallyltransferase.